Reading from the N-terminus, the 635-residue chain is Putative adagio-like protein 2 (635 aa).

Acidic residues predominate over residues 1 to 25; the sequence is MEWDSDSEGSGDEEEEEEEEEEEGV. The tract at residues 1–32 is disordered; the sequence is MEWDSDSEGSGDEEEEEEEEEEEGVEVGGGGD. The region spanning 44 to 123 is the PAS domain; the sequence is ALAIEGVLGA…TDIRRCLEEG (80 aa). Cysteine 91 is subject to S-4a-FMN cysteine. The region spanning 209-255 is the F-box domain; the sequence is SDLFLLSDEVLCQKILSRLSPRDIASVNSVCKRLYHLTRNDDLWRMV. Kelch repeat units follow at residues 371-421, 423-474, 476-530, and 542-594; these read RLVL…TLDG, KLVV…VYDG, KILM…PPPR, and RILI…VVGG.

It belongs to the ADAGIO family. Post-translationally, FMN binds covalently to cysteine after exposure to blue light and is reversed in the dark.

Its subcellular location is the nucleus. Its pathway is protein modification; protein ubiquitination. In terms of biological role, component of an E3 ubiquitin ligase complex that plays a central role in blue light-dependent circadian cycles. Acts as a blue light photoreceptor, due to the presence of FMN, that mediates light-regulated protein degradation of critical clock components by targeting them to the proteasome complex. The protein is Putative adagio-like protein 2 of Oryza sativa subsp. japonica (Rice).